Consider the following 148-residue polypeptide: Urease accessory protein UreE (148 aa).

This sequence belongs to the UreE family.

Its subcellular location is the cytoplasm. Functionally, involved in urease metallocenter assembly. Binds nickel. Probably functions as a nickel donor during metallocenter assembly. The polypeptide is Urease accessory protein UreE (Aliarcobacter butzleri (strain RM4018) (Arcobacter butzleri)).